A 190-amino-acid chain; its full sequence is Holliday junction branch migration complex subunit RuvA (190 aa).

A domain I region spans residues M1–G64. The tract at residues T65–G137 is domain II. Positions G137–H141 are flexible linker. The interval A142 to R190 is domain III.

It belongs to the RuvA family. In terms of assembly, homotetramer. Forms an RuvA(8)-RuvB(12)-Holliday junction (HJ) complex. HJ DNA is sandwiched between 2 RuvA tetramers; dsDNA enters through RuvA and exits via RuvB. An RuvB hexamer assembles on each DNA strand where it exits the tetramer. Each RuvB hexamer is contacted by two RuvA subunits (via domain III) on 2 adjacent RuvB subunits; this complex drives branch migration. In the full resolvosome a probable DNA-RuvA(4)-RuvB(12)-RuvC(2) complex forms which resolves the HJ.

It is found in the cytoplasm. Its function is as follows. The RuvA-RuvB-RuvC complex processes Holliday junction (HJ) DNA during genetic recombination and DNA repair, while the RuvA-RuvB complex plays an important role in the rescue of blocked DNA replication forks via replication fork reversal (RFR). RuvA specifically binds to HJ cruciform DNA, conferring on it an open structure. The RuvB hexamer acts as an ATP-dependent pump, pulling dsDNA into and through the RuvAB complex. HJ branch migration allows RuvC to scan DNA until it finds its consensus sequence, where it cleaves and resolves the cruciform DNA. This is Holliday junction branch migration complex subunit RuvA from Bordetella avium (strain 197N).